The primary structure comprises 143 residues: Hemoglobin subunit alpha-2 (143 aa).

Ser2 carries the post-translational modification N-acetylserine. The Globin domain maps to 2 to 143 (SLTEKDKAAV…LSLALAEKYR (142 aa)). His60 serves as a coordination point for O2. Heme b is bound at residue His89.

It belongs to the globin family. Hb2 is a heterotetramer of two alpha-2 chains and two beta-1 chains; Hb3 is a heterotetramer of two alpha-2 chains and two beta-2 chains. In terms of tissue distribution, red blood cells.

Involved in oxygen transport from gills to the various peripheral tissues. This chain is Hemoglobin subunit alpha-2 (hba2), found in Anarhichas minor (Arctic spotted wolffish).